Reading from the N-terminus, the 440-residue chain is Ribosomal protein uS12 methylthiotransferase RimO (440 aa).

Residues 8-118 (PTVGFVSLGC…VMGIVHTHLP (111 aa)) form the MTTase N-terminal domain. Cysteine 17, cysteine 53, cysteine 82, cysteine 149, cysteine 153, and cysteine 156 together coordinate [4Fe-4S] cluster. The region spanning 135 to 372 (LTPDHFAYLK…MQVQEDISAD (238 aa)) is the Radical SAM core domain. Residues 375-440 (AAKIDTVIQV…DHHDLYAQVV (66 aa)) enclose the TRAM domain.

The protein belongs to the methylthiotransferase family. RimO subfamily. [4Fe-4S] cluster is required as a cofactor.

It is found in the cytoplasm. The catalysed reaction is L-aspartate(89)-[ribosomal protein uS12]-hydrogen + (sulfur carrier)-SH + AH2 + 2 S-adenosyl-L-methionine = 3-methylsulfanyl-L-aspartate(89)-[ribosomal protein uS12]-hydrogen + (sulfur carrier)-H + 5'-deoxyadenosine + L-methionine + A + S-adenosyl-L-homocysteine + 2 H(+). Its function is as follows. Catalyzes the methylthiolation of an aspartic acid residue of ribosomal protein uS12. The chain is Ribosomal protein uS12 methylthiotransferase RimO from Dechloromonas aromatica (strain RCB).